We begin with the raw amino-acid sequence, 367 residues long: tRNA-specific 2-thiouridylase MnmA (367 aa).

Residues 24–31 (AMSGGVDS) and leucine 50 each bind ATP. The active-site Nucleophile is cysteine 115. Cysteine 115 and cysteine 211 are disulfide-bonded. Position 139 (glycine 139) interacts with ATP. Residues 161–163 (KDQ) form an interaction with tRNA region. The active-site Cysteine persulfide intermediate is the cysteine 211.

The protein belongs to the MnmA/TRMU family.

It is found in the cytoplasm. The catalysed reaction is S-sulfanyl-L-cysteinyl-[protein] + uridine(34) in tRNA + AH2 + ATP = 2-thiouridine(34) in tRNA + L-cysteinyl-[protein] + A + AMP + diphosphate + H(+). Catalyzes the 2-thiolation of uridine at the wobble position (U34) of tRNA, leading to the formation of s(2)U34. The polypeptide is tRNA-specific 2-thiouridylase MnmA (Ehrlichia canis (strain Jake)).